We begin with the raw amino-acid sequence, 172 residues long: Photosystem I assembly protein Ycf3 (172 aa).

3 TPR repeats span residues 35–68 (AFSYYRNGMSAQAEGEYAEALQNYYEAMRLEVDA), 72–105 (SYILYNIGLIHTSNGEHGRALEYYYQALERNPSL), and 120–153 (GEQAIENGQSEISQILFEKAADYWKEAIRLAPTN).

The protein belongs to the Ycf3 family.

The protein localises to the plastid. It localises to the chloroplast thylakoid membrane. Its function is as follows. Essential for the assembly of the photosystem I (PSI) complex. May act as a chaperone-like factor to guide the assembly of the PSI subunits. The protein is Photosystem I assembly protein Ycf3 of Chlamydomonas reinhardtii (Chlamydomonas smithii).